The primary structure comprises 207 residues: Small ribosomal subunit protein uS7y (207 aa).

Ala-2 is modified (N-acetylalanine).

It belongs to the universal ribosomal protein uS7 family. In terms of tissue distribution, expressed in root tips, lateral root primordia, leaf primordia, shoot apical meristem and vasculature of cotyledons.

The polypeptide is Small ribosomal subunit protein uS7y (Arabidopsis thaliana (Mouse-ear cress)).